The chain runs to 258 residues: Exosome complex component Rrp41 (258 aa).

The protein belongs to the RNase PH family. Rrp41 subfamily. In terms of assembly, component of the archaeal exosome complex. Forms a hexameric ring-like arrangement composed of 3 Rrp41-Rrp42 heterodimers. The hexameric ring associates with a trimer of Rrp4 and/or Csl4 subunits.

The protein localises to the cytoplasm. Functionally, catalytic component of the exosome, which is a complex involved in RNA degradation. Has 3'-&gt;5' exoribonuclease activity. Can also synthesize heteromeric RNA-tails. The protein is Exosome complex component Rrp41 of Archaeoglobus fulgidus (strain ATCC 49558 / DSM 4304 / JCM 9628 / NBRC 100126 / VC-16).